We begin with the raw amino-acid sequence, 399 residues long: C-type lectin domain family 4 member M (399 aa).

Residues 1 to 49 are Cytoplasmic-facing; the sequence is MSDSKEQRVQPLGLLEEDPTTSGIRLFPRDFQFQQTHGHKSSTGCLGHG. Residues 14 to 15 carry the Endocytosis signal motif; sequence LL. A helical; Signal-anchor for type II membrane protein transmembrane segment spans residues 50–70; the sequence is PLVLQLLSFTLLAGFLVAILV. The Extracellular portion of the chain corresponds to 71–399; that stretch reads QVYKGPSSLS…KKPTACFRDE (329 aa). Asn-92 carries an N-linked (GlcNAc...) asparagine glycan. 7 consecutive repeat copies span residues 108–130, 131–153, 154–176, 177–199, 200–222, 223–245, and 246–268. The segment at 108 to 269 is 7 X approximate tandem repeats; sequence KLQEIYQELT…AFERLCCRCP (162 aa). 4 cysteine pairs are disulfide-bonded: Cys-265-Cys-395, Cys-268-Cys-279, Cys-296-Cys-389, and Cys-368-Cys-381. Residues 274-390 enclose the C-type lectin domain; sequence FFQGNCYFIS…CNVDNYWICK (117 aa). Ca(2+) contacts are provided by Glu-359, Asn-361, Ser-363, Glu-366, Asn-377, and Asp-378. N-linked (GlcNAc...) asparagine glycosylation is present at Asn-361.

In terms of assembly, homotetramer.

The protein resides in the membrane. Probable pathogen-recognition receptor involved in peripheral immune surveillance in liver. May mediate the endocytosis of pathogens which are subsequently degraded in lysosomal compartments. Probably recognizes in a calcium-dependent manner high mannose N-linked oligosaccharides in a variety of pathogen antigens. Is a receptor for ICAM3, probably by binding to mannose-like carbohydrates. In Nomascus concolor (Black crested gibbon), this protein is C-type lectin domain family 4 member M (CLEC4M).